The primary structure comprises 148 residues: Glutamate mutase sigma subunit 2 (148 aa).

Positions 1–134 (MRTVILGVIG…EALKADLGHR (134 aa)) constitute a B12-binding domain. Adenosylcob(III)alamin is bound by residues 11-15 (SDAHV), His14, 59-61 (SSL), and 90-94 (NLAVG). Basic and acidic residues predominate over residues 129-141 (ADLGHRSREEASS). The segment at 129–148 (ADLGHRSREEASSEKVQLGS) is disordered.

Belongs to the methylaspartate mutase GlmS subunit family. In terms of assembly, heterotetramer composed of 2 epsilon subunits (GlmE) and 2 sigma subunits (GlmS). GlmE exists as a homodimer and GlmS as a monomer. It depends on adenosylcob(III)alamin as a cofactor.

The catalysed reaction is (2S,3S)-3-methyl-L-aspartate = L-glutamate. Its pathway is amino-acid degradation; L-glutamate degradation via mesaconate pathway; acetate and pyruvate from L-glutamate: step 1/4. Its function is as follows. Catalyzes the carbon skeleton rearrangement of L-glutamate to L-threo-3-methylaspartate ((2S,3S)-3-methylaspartate). In Haloarcula marismortui (strain ATCC 43049 / DSM 3752 / JCM 8966 / VKM B-1809) (Halobacterium marismortui), this protein is Glutamate mutase sigma subunit 2.